The sequence spans 737 residues: Prospero homeobox protein 1 (737 aa).

Residues 1 to 28 (MPDHDSTALLSRQTKRRRVDIGVKRTVG) are interaction with RORG. Residues 103–135 (KNGGTEPSFQASGLSSTGSEVHQEDICSNSSRD) are compositionally biased toward polar residues. The disordered stretch occupies residues 103 to 149 (KNGGTEPSFQASGLSSTGSEVHQEDICSNSSRDSPPECLSPFGRPTM). A phosphoserine mark is found at S177, S179, and S199. Residues 178-242 (HSPSVALRGN…REERRQLKQQ (65 aa)) are disordered. Residues 213–223 (LPQQQQQSFQQ) show a composition bias toward low complexity. A compositionally biased stretch (basic and acidic residues) spans 227–242 (ARKEQKREERRQLKQQ). S291 and S295 each carry phosphoserine. The segment covering 320–337 (MAENKPKREGNNKERDHG) has biased composition (basic and acidic residues). Disordered regions lie at residues 320–344 (MAEN…LQPE) and 445–476 (KNSS…TGFT). K324 is covalently cross-linked (Glycyl lysine isopeptide (Lys-Gly) (interchain with G-Cter in SUMO2)). A compositionally biased stretch (polar residues) spans 464–476 (LHQSPLSATTGFT). Phosphoserine occurs at positions 511, 514, and 557. The Prospero-type homeo domain maps to 577-635 (QEGLSPNHLKKAKLMFFYTRYPSSNMLKTYFSDVKFNRCITSQLIKWFSNFREFYYIQM). The tract at residues 577-735 (QEGLSPNHLK…KSPNCLQELL (159 aa)) is homeo-Prospero. The 100-residue stretch at 636–735 (EKYARQAIND…KSPNCLQELL (100 aa)) folds into the Prospero domain. The tract at residues 723-729 (EIFKSPN) is essential for nuclear localization, interaction with RORG, repression of RORG transcriptional activator activity.

It belongs to the Prospero homeodomain family. In terms of assembly, interacts with RORA and RORG (via AF-2 motif). Most actively expressed in the developing lens. Detected also in embryonic brain, lung, liver and kidney. In adult, it is more abundant in heart and liver than in brain, skeletal muscle, kidney and pancreas.

It is found in the nucleus. Transcription factor involved in developmental processes such as cell fate determination, gene transcriptional regulation and progenitor cell regulation in a number of organs. Plays a critical role in embryonic development and functions as a key regulatory protein in neurogenesis and the development of the heart, eye lens, liver, pancreas and the lymphatic system. Involved in the regulation of the circadian rhythm. Represses: transcription of the retinoid-related orphan receptor RORG, transcriptional activator activity of RORA and RORG and the expression of RORA/G-target genes including core clock components: BMAL1, NPAS2 and CRY1 and metabolic genes: AVPR1A and ELOVL3. The protein is Prospero homeobox protein 1 (PROX1) of Homo sapiens (Human).